A 339-amino-acid chain; its full sequence is uncharacterized protein (339 aa).

Positions 1–29 (MIKQVCKNITICSLALSTALTVFPASSYA) are cleaved as a signal peptide.

This sequence belongs to the aerolysin family.

This is an uncharacterized protein from Staphylococcus aureus (strain MRSA252).